The chain runs to 221 residues: Early nodulin-like protein 4 (221 aa).

An N-terminal signal peptide occupies residues 1-21; it reads MVFVKMTDVYLMIVMLMGLGF. In terms of domain architecture, Phytocyanin spans 29–130; sequence HKFYVGGRDG…GQKLAVTVMS (102 aa). N-linked (GlcNAc...) asparagine glycans are attached at residues asparagine 59 and asparagine 85. Cysteine 84 and cysteine 118 are disulfide-bonded. Residues 130–185 are disordered; sequence STGHHSHTPRHPSPSPSPSASPVRKALLSPAPIPVHKALSSPAPTPGVDPSHSEVL. Residue asparagine 197 is the site of GPI-anchor amidated asparagine attachment. The propeptide at 198–221 is removed in mature form; sequence LAGSVAPGVISLGLVLVIMISSMV.

The protein belongs to the early nodulin-like (ENODL) family. Confined to flowers.

It localises to the cell membrane. Functionally, may act as a carbohydrate transporter. This chain is Early nodulin-like protein 4, found in Arabidopsis thaliana (Mouse-ear cress).